The following is a 442-amino-acid chain: tRNA-2-methylthio-N(6)-dimethylallyladenosine synthase (442 aa).

One can recognise an MTTase N-terminal domain in the interval 2–120 (KKVFIRTFGC…LPKMIVDKET (119 aa)). [4Fe-4S] cluster-binding residues include cysteine 11, cysteine 49, cysteine 83, cysteine 157, cysteine 161, and cysteine 164. Residues 143–375 (RVEGGAAFVS…NEVIEAETAR (233 aa)) enclose the Radical SAM core domain. The 64-residue stretch at 378–441 (QTMIGTVQRC…TFSLRGKVVE (64 aa)) folds into the TRAM domain.

The protein belongs to the methylthiotransferase family. MiaB subfamily. Monomer. It depends on [4Fe-4S] cluster as a cofactor.

The protein localises to the cytoplasm. It catalyses the reaction N(6)-dimethylallyladenosine(37) in tRNA + (sulfur carrier)-SH + AH2 + 2 S-adenosyl-L-methionine = 2-methylsulfanyl-N(6)-dimethylallyladenosine(37) in tRNA + (sulfur carrier)-H + 5'-deoxyadenosine + L-methionine + A + S-adenosyl-L-homocysteine + 2 H(+). Its function is as follows. Catalyzes the methylthiolation of N6-(dimethylallyl)adenosine (i(6)A), leading to the formation of 2-methylthio-N6-(dimethylallyl)adenosine (ms(2)i(6)A) at position 37 in tRNAs that read codons beginning with uridine. This chain is tRNA-2-methylthio-N(6)-dimethylallyladenosine synthase, found in Neisseria meningitidis serogroup C / serotype 2a (strain ATCC 700532 / DSM 15464 / FAM18).